The following is a 689-amino-acid chain: Quinidine resistance protein 3 (689 aa).

The segment covering 1-24 (MQAQGSQSNVGSLRSNCSDNSLPN) has biased composition (polar residues). The disordered stretch occupies residues 1–73 (MQAQGSQSNV…DNQLSRLKSE (73 aa)). Over 1 to 108 (MQAQGSQSNV…RDYPPMMKKM (108 aa)) the chain is Extracellular. 2 stretches are compositionally biased toward basic and acidic residues: residues 29–51 (MHCD…EKTN) and 59–73 (SREH…LKSE). Residues 109–131 (IVFLIAFSSMMGPMGTSIIFPAI) form a helical membrane-spanning segment. At 132–139 (NSITTEFK) the chain is on the cytoplasmic side. A helical membrane pass occupies residues 140–163 (TSVIMVNVSIGVYLLSLGVFPLWW). Residues 164 to 175 (SSLSELEGRRTT) are Extracellular-facing. Residues 176–193 (YITSFALLFAFNIGSALA) traverse the membrane as a helical segment. Over 194–235 (PDINSFIALRMLCGAASASVQSVGAGTVADLYISEDRGKNLS) the chain is Cytoplasmic. A helical transmembrane segment spans residues 236–256 (YYYLGPLLAPLLSPIFGSLLV). Over 257–265 (NRWPWRSTQ) the chain is Extracellular. Residues 266–283 (WFMVILSGCNVILLTVLL) traverse the membrane as a helical segment. Topologically, residues 284 to 475 (PETLRKQDSK…KSLHFLEYPP (192 aa)) are cytoplasmic. The residue at position 436 (serine 436) is a Phosphoserine. The helical transmembrane segment at 476–493 (VALAITFSAISFSTVYFV) threads the bilayer. Topologically, residues 494-510 (NMTVEYKYSRPPYNFKP) are extracellular. The chain crosses the membrane as a helical span at residues 511 to 532 (LYIGLLYIPNSVTYFFASIYGG). Residues 533–558 (RWVDMLLKRYKEKYGILAPEARISWN) are Cytoplasmic-facing. Residues 559–577 (VVTSVISFPIALLIFGWCL) form a helical membrane-spanning segment. Residues 578 to 586 (DKKCHWVTP) are Extracellular-facing. A helical membrane pass occupies residues 587-609 (LIGTALFGYAAMMTIGATLSYLV). Topologically, residues 610 to 624 (DSLPGKGATGVALNN) are cytoplasmic. The chain crosses the membrane as a helical span at residues 625–642 (LIRQILAATAVFVTTPML). Residues 643-648 (NGMGTG) are Extracellular-facing. Residues 649–668 (WAFTMLAFIVLGASSVLIIL) form a helical membrane-spanning segment. Over 669-689 (KKHGDYWRENYDLQKLYDKID) the chain is Cytoplasmic.

The protein belongs to the major facilitator superfamily. CAR1 family.

It is found in the cell membrane. Its function is as follows. Multidrug resistance transporter involved in resistance and adaptation to quinidine and to the herbicide barban (4-chloro-2-butynyl [3-chlorophenyl] carbamate). This chain is Quinidine resistance protein 3 (QDR3), found in Saccharomyces cerevisiae (strain ATCC 204508 / S288c) (Baker's yeast).